A 713-amino-acid polypeptide reads, in one-letter code: Calpastatin (713 aa).

Disordered stretches follow at residues 1 to 187 and 211 to 506; these read MNPT…LDPM and DKKE…PVLP. A compositionally biased stretch (basic residues) spans 21–30; the sequence is PNKKRHKKQA. A Glycyl lysine isopeptide (Lys-Gly) (interchain with G-Cter in SUMO2) cross-link involves residue Lys32. Residues 46–63 are compositionally biased toward basic and acidic residues; the sequence is VVHEKKTQEVKPKEHPEP. Lys50 carries the post-translational modification N6-acetyllysine. Over residues 85 to 94 the composition is skewed to polar residues; the sequence is SRSNEQPTSE. A phosphoserine mark is found at Ser87 and Ser134. Residue Thr136 is modified to Phosphothreonine. One copy of the Inhibitory domain 1 repeat lies at 171–223; sequence TEEDNTTYTGPEVLDPMSSTYIEELGKREVTLPPKYRELLDKKEGIPVPPPDT. Residue Ser244 is modified to Phosphoserine. Composition is skewed to basic and acidic residues over residues 248–258, 304–332, and 342–367; these read DGKKTEKEKST, RKSEPELDLSSIKEIDEAKAKEEKLKKCG, and YRLKPAMDKDGKPLLPEAEEKPKPLS. An Inhibitory domain 2 repeat occupies 307 to 359; it reads EPELDLSSIKEIDEAKAKEEKLKKCGEDDETVPPEYRLKPAMDKDGKPLLPEA. Phosphoserine is present on residues Ser367, Ser369, and Ser376. A compositionally biased stretch (acidic residues) spans 370-379; the sequence is ELIDELSEDF. Positions 380–397 are enriched in basic and acidic residues; the sequence is DQSKRKEKQSKPTEKTKE. Ser441 carries the phosphoserine modification. Basic and acidic residues predominate over residues 443–502; that stretch reads GKKEADPEDGKPVEDKVKEKAKEEDREKLGEKEETIPPDYRLEEVKDKDGKTLPHKDPKE. The Inhibitory domain 3 repeat unit spans residues 447-500; the sequence is ADPEDGKPVEDKVKEKAKEEDREKLGEKEETIPPDYRLEEVKDKDGKTLPHKDP. A phosphoserine mark is found at Ser517 and Ser528. Residues 536-713 are disordered; that stretch reads SAAVSEVVSQ…KQKSDGKSTS (178 aa). Residues 542–553 are compositionally biased toward polar residues; that stretch reads VVSQTSAPTTHS. Ser575 and Ser577 each carry phosphoserine. One copy of the Inhibitory domain 4 repeat lies at 583–636; that stretch reads PDPDENKPIEDKVKEKAEAEHRDKLGERDDTIPPEYRHLLDKDEEGKSTKPPTK. Composition is skewed to basic and acidic residues over residues 583–646 and 691–713; these read PDPD…KPEA and KAKDSTKAKEETSKQKSDGKSTS.

Belongs to the protease inhibitor I27 (calpastatin) family.

Specific inhibition of calpain (calcium-dependent cysteine protease). Plays a key role in postmortem tenderization of meat and have been proposed to be involved in muscle protein degradation in living tissue. This Sus scrofa (Pig) protein is Calpastatin (CAST).